A 159-amino-acid chain; its full sequence is Ribosomal RNA large subunit methyltransferase H (159 aa).

S-adenosyl-L-methionine is bound by residues leucine 76, glycine 108, and 127 to 132; that span reads FSKMTF.

The protein belongs to the RNA methyltransferase RlmH family. In terms of assembly, homodimer.

Its subcellular location is the cytoplasm. It catalyses the reaction pseudouridine(1915) in 23S rRNA + S-adenosyl-L-methionine = N(3)-methylpseudouridine(1915) in 23S rRNA + S-adenosyl-L-homocysteine + H(+). Functionally, specifically methylates the pseudouridine at position 1915 (m3Psi1915) in 23S rRNA. The polypeptide is Ribosomal RNA large subunit methyltransferase H (Halalkalibacterium halodurans (strain ATCC BAA-125 / DSM 18197 / FERM 7344 / JCM 9153 / C-125) (Bacillus halodurans)).